The chain runs to 561 residues: DNA ligase B (561 aa).

Residue lysine 125 is the N6-AMP-lysine intermediate of the active site.

The protein belongs to the NAD-dependent DNA ligase family. LigB subfamily.

The enzyme catalyses NAD(+) + (deoxyribonucleotide)n-3'-hydroxyl + 5'-phospho-(deoxyribonucleotide)m = (deoxyribonucleotide)n+m + AMP + beta-nicotinamide D-nucleotide.. In terms of biological role, catalyzes the formation of phosphodiester linkages between 5'-phosphoryl and 3'-hydroxyl groups in double-stranded DNA using NAD as a coenzyme and as the energy source for the reaction. The polypeptide is DNA ligase B (Salmonella agona (strain SL483)).